A 268-amino-acid chain; its full sequence is Eukaryotic translation initiation factor 3 subunit J (268 aa).

2 disordered regions span residues 1–117 and 219–242; these read MTPS…DLKH and NEKMREERAADKGSKKSKAAKTKV. Acidic residues predominate over residues 26 to 44; the sequence is DEEDEEVLDSWDAAEDSEV. A coiled-coil region spans residues 40 to 95; it reads EDSEVEREKAAKAAEAKAKAEAEAAAKKKSKAQRIEEHKAERRKNAEADSEEDEDE. 2 stretches are compositionally biased toward basic and acidic residues: residues 45 to 65 and 72 to 86; these read EREKAAKAAEAKAKAEAEAAA and QRIEEHKAERRKNAE. Residues 87 to 99 are compositionally biased toward acidic residues; it reads ADSEEDEDEDEDE. 2 stretches are compositionally biased toward basic and acidic residues: residues 100-117 and 220-232; these read AEKRARLRRTEKDSDLKH and EKMREERAADKGS.

The protein belongs to the eIF-3 subunit J family. Component of the eukaryotic translation initiation factor 3 (eIF-3) complex.

It localises to the cytoplasm. Component of the eukaryotic translation initiation factor 3 (eIF-3) complex, which is involved in protein synthesis of a specialized repertoire of mRNAs and, together with other initiation factors, stimulates binding of mRNA and methionyl-tRNAi to the 40S ribosome. The eIF-3 complex specifically targets and initiates translation of a subset of mRNAs involved in cell proliferation. The protein is Eukaryotic translation initiation factor 3 subunit J (hcr1) of Aspergillus clavatus (strain ATCC 1007 / CBS 513.65 / DSM 816 / NCTC 3887 / NRRL 1 / QM 1276 / 107).